The primary structure comprises 635 residues: Biosynthetic arginine decarboxylase (635 aa).

An N6-(pyridoxal phosphate)lysine modification is found at Lys-100. Substrate is bound at residue 282 to 292 (VDIGGGLGVDY).

Belongs to the Orn/Lys/Arg decarboxylase class-II family. SpeA subfamily. Mg(2+) is required as a cofactor. Requires pyridoxal 5'-phosphate as cofactor.

The catalysed reaction is L-arginine + H(+) = agmatine + CO2. It participates in amine and polyamine biosynthesis; agmatine biosynthesis; agmatine from L-arginine: step 1/1. Its function is as follows. Catalyzes the biosynthesis of agmatine from arginine. The protein is Biosynthetic arginine decarboxylase of Geobacter sulfurreducens (strain ATCC 51573 / DSM 12127 / PCA).